The following is a 111-amino-acid chain: Cytochrome c oxidase subunit 6A1, mitochondrial (111 aa).

Residues 1–26 (MASAVLSASRVSRPLGRALPGLRRPM) constitute a mitochondrion transit peptide. Residues 27-36 (SSGAHGEEGS) are Mitochondrial matrix-facing. A helical transmembrane segment spans residues 37 to 61 (ARMWKALTYFVALPGVGVSMLNVFL). The Mitochondrial intermembrane segment spans residues 62 to 111 (KSRHEEHERPPFVAYPHLRIRTKPFPWGDGNHTLFHNPHVNPLPTGYEDE).

Belongs to the cytochrome c oxidase subunit 6A family. As to quaternary structure, component of the cytochrome c oxidase (complex IV, CIV), a multisubunit enzyme composed of 14 subunits. The complex is composed of a catalytic core of 3 subunits MT-CO1, MT-CO2 and MT-CO3, encoded in the mitochondrial DNA, and 11 supernumerary subunits COX4I, COX5A, COX5B, COX6A, COX6B, COX6C, COX7A, COX7B, COX7C, COX8 and NDUFA4, which are encoded in the nuclear genome. The complex exists as a monomer or a dimer and forms supercomplexes (SCs) in the inner mitochondrial membrane with NADH-ubiquinone oxidoreductase (complex I, CI) and ubiquinol-cytochrome c oxidoreductase (cytochrome b-c1 complex, complex III, CIII), resulting in different assemblies (supercomplex SCI(1)III(2)IV(1) and megacomplex MCI(2)III(2)IV(2)).

Its subcellular location is the mitochondrion inner membrane. Its pathway is energy metabolism; oxidative phosphorylation. In terms of biological role, component of the cytochrome c oxidase, the last enzyme in the mitochondrial electron transport chain which drives oxidative phosphorylation. The respiratory chain contains 3 multisubunit complexes succinate dehydrogenase (complex II, CII), ubiquinol-cytochrome c oxidoreductase (cytochrome b-c1 complex, complex III, CIII) and cytochrome c oxidase (complex IV, CIV), that cooperate to transfer electrons derived from NADH and succinate to molecular oxygen, creating an electrochemical gradient over the inner membrane that drives transmembrane transport and the ATP synthase. Cytochrome c oxidase is the component of the respiratory chain that catalyzes the reduction of oxygen to water. Electrons originating from reduced cytochrome c in the intermembrane space (IMS) are transferred via the dinuclear copper A center (CU(A)) of subunit 2 and heme A of subunit 1 to the active site in subunit 1, a binuclear center (BNC) formed by heme A3 and copper B (CU(B)). The BNC reduces molecular oxygen to 2 water molecules unsing 4 electrons from cytochrome c in the IMS and 4 protons from the mitochondrial matrix. This is Cytochrome c oxidase subunit 6A1, mitochondrial (Cox6a1) from Mus musculus (Mouse).